We begin with the raw amino-acid sequence, 306 residues long: Ribonuclease Z (306 aa).

Positions 63, 65, 67, 68, 140, 211, and 269 each coordinate Zn(2+). Catalysis depends on Asp-67, which acts as the Proton acceptor.

Belongs to the RNase Z family. Homodimer. Zn(2+) is required as a cofactor.

The catalysed reaction is Endonucleolytic cleavage of RNA, removing extra 3' nucleotides from tRNA precursor, generating 3' termini of tRNAs. A 3'-hydroxy group is left at the tRNA terminus and a 5'-phosphoryl group is left at the trailer molecule.. Zinc phosphodiesterase, which displays some tRNA 3'-processing endonuclease activity. Probably involved in tRNA maturation, by removing a 3'-trailer from precursor tRNA. This Listeria innocua serovar 6a (strain ATCC BAA-680 / CLIP 11262) protein is Ribonuclease Z.